Here is an 857-residue protein sequence, read N- to C-terminus: Leucine--tRNA ligase (857 aa).

The 'HIGH' region signature appears at 42–52 (PYPSGRLHMGH). The 'KMSKS' region signature appears at 617 to 621 (KMSKS). K620 lines the ATP pocket.

This sequence belongs to the class-I aminoacyl-tRNA synthetase family.

The protein localises to the cytoplasm. It catalyses the reaction tRNA(Leu) + L-leucine + ATP = L-leucyl-tRNA(Leu) + AMP + diphosphate. The protein is Leucine--tRNA ligase of Vibrio vulnificus (strain CMCP6).